Reading from the N-terminus, the 320-residue chain is Olfactory receptor 52W1 (320 aa).

Topologically, residues 1–30 are extracellular; the sequence is MAETLQLNSTFLHPNFFILTGFPGLGSAQT. N-linked (GlcNAc...) asparagine glycosylation is present at Asn-8. A helical membrane pass occupies residues 31 to 51; the sequence is WLTLVFGPIYLLALLGNGALP. Residues 52–59 lie on the Cytoplasmic side of the membrane; sequence AVVWIDST. A helical transmembrane segment spans residues 60–80; it reads LHQPMFLLLAILAATDLGLAT. Residues 81-104 are Extracellular-facing; sequence SIAPGLLAVLWLGPRSVPYAVCLV. A helical membrane pass occupies residues 105-125; sequence QMFFVHALTAMESGVLLAMAC. Topologically, residues 126-144 are cytoplasmic; it reads DRAAAIGRPLHYPVLVTKA. Residues 145–165 form a helical membrane-spanning segment; the sequence is CVGYAALALALKAVAIVVPFP. Residues 166-201 lie on the Extracellular side of the membrane; that stretch reads LLVAKFEHFQAKTIGHTYCAHMAVVELVVGNTQATN. A helical membrane pass occupies residues 202-222; the sequence is LYGLALSLAISGMDILGITGS. The Cytoplasmic portion of the chain corresponds to 223–242; it reads YGLIAHAVLQLPTREAHAKA. A helical membrane pass occupies residues 243–263; sequence FGTCSSHICVILAFYIPGLFS. Over 264–279 the chain is Extracellular; the sequence is YLTHRFGHHTVPKPVH. Residues 280–300 traverse the membrane as a helical segment; the sequence is ILLSNIYLLLPPALNPLIYGA. The Cytoplasmic portion of the chain corresponds to 301-320; sequence RTKQIRDRLLETFTFRKSPL.

This sequence belongs to the G-protein coupled receptor 1 family.

The protein localises to the cell membrane. In terms of biological role, odorant receptor. This chain is Olfactory receptor 52W1 (OR52W1), found in Homo sapiens (Human).